Consider the following 365-residue polypeptide: Cyclin-D5-2 (365 aa).

The protein belongs to the cyclin family. Cyclin D subfamily.

The polypeptide is Cyclin-D5-2 (CYCD5-2) (Oryza sativa subsp. japonica (Rice)).